A 328-amino-acid chain; its full sequence is Carbonic anhydrase-related protein 11 (328 aa).

The signal sequence occupies residues 1 to 23 (MGAAPRLSAPRVLVLWAALGAAA). One can recognise an Alpha-carbonic anhydrase domain in the interval 33-303 (DWWSYKDNLQ…LAHRALRGNR (271 aa)). An N-linked (GlcNAc...) asparagine glycan is attached at N118. The interval 300–328 (RGNRDPRHPERRCRGPNYRLHVDDVPHGL) is disordered. A compositionally biased stretch (basic and acidic residues) spans 319–328 (LHVDDVPHGL).

Belongs to the alpha-carbonic anhydrase family.

It is found in the secreted. Does not have a catalytic activity. The sequence is that of Carbonic anhydrase-related protein 11 (CA11) from Ovis aries (Sheep).